Consider the following 290-residue polypeptide: uncharacterized protein (290 aa).

The region spanning 2–238 (LKTENLSVGY…EIVNELYDLK (237 aa)) is the ABC transporter domain. 34-41 (GPNGAGKS) provides a ligand contact to ATP.

It belongs to the ABC transporter superfamily.

This is an uncharacterized protein from Methanocaldococcus jannaschii (strain ATCC 43067 / DSM 2661 / JAL-1 / JCM 10045 / NBRC 100440) (Methanococcus jannaschii).